We begin with the raw amino-acid sequence, 413 residues long: Methylaspartate ammonia-lyase (413 aa).

Residue glutamine 172 participates in (2S,3S)-3-methyl-L-aspartate binding. Positions 238, 273, and 307 each coordinate Mg(2+). Glutamine 329 lines the (2S,3S)-3-methyl-L-aspartate pocket. The active-site Proton acceptor is lysine 331. (2S,3S)-3-methyl-L-aspartate contacts are provided by residues 360–361 (TC) and cysteine 361.

This sequence belongs to the methylaspartate ammonia-lyase family. In terms of assembly, homodimer. Mg(2+) is required as a cofactor.

It carries out the reaction (2S,3S)-3-methyl-L-aspartate = mesaconate + NH4(+). The protein operates within amino-acid degradation; L-glutamate degradation via mesaconate pathway; acetate and pyruvate from L-glutamate: step 2/4. With respect to regulation, inhibited by calcium ions. Involved in the methylaspartate cycle. Catalyzes the formation of the alpha,beta-unsaturated bond by the reversible anti elimination of ammonia from L-threo-beta-methylaspartate (L-threo-(2S,3S)-3-methylaspartate) to give mesaconate. It can also use L-erythro-beta-methylaspartate (L-erythro-(2S,3R)-3-methylaspartate), L-aspartate, fumarate and ethylfumarate as substrates. This is Methylaspartate ammonia-lyase from Clostridium tetanomorphum.